The following is a 382-amino-acid chain: Beta-1,4-galactosyltransferase 6 (382 aa).

The Cytoplasmic portion of the chain corresponds to 1 to 14; sequence MSVLRRMMRVSNRS. The helical; Signal-anchor for type II membrane protein transmembrane segment at 15–35 threads the bilayer; that stretch reads LLAFIFFFSLSSSCLYFIYVA. The Lumenal segment spans residues 36–382; it reads PGIANTYLFM…MPELAPIEDY (347 aa). N-linked (GlcNAc...) asparagine glycans are attached at residues Asn-71, Asn-75, Asn-83, Asn-84, Asn-99, and Asn-122. Cys-108 and Cys-152 form a disulfide bridge. UDP-alpha-D-galactose contacts are provided by residues 163–167, 202–204, 229–230, Tyr-258, and Trp-290; these read PFRNR, FNR, and VD. Cys-223 and Cys-242 form a disulfide bridge. Asp-230 contacts Mn(2+). 292-295 is an N-acetyl-D-glucosamine binding site; sequence GEDD. Residue Asn-307 is glycosylated (N-linked (GlcNAc...) asparagine). His-323 serves as a coordination point for Mn(2+). 323-324 contacts UDP-alpha-D-galactose; sequence HH. Residue Arg-334 participates in N-acetyl-D-glucosamine binding. Asn-367 carries an N-linked (GlcNAc...) asparagine glycan.

This sequence belongs to the glycosyltransferase 7 family. The cofactor is Mn(2+). Mg(2+) serves as cofactor. As to expression, high expression in brain and adrenal gland, lower in liver, lung, colon and peripheral white blood cells.

It localises to the golgi apparatus. The protein resides in the golgi stack membrane. The enzyme catalyses a beta-D-glucosyl-(1&lt;-&gt;1')-N-acylsphing-4-enine + UDP-alpha-D-galactose = a beta-D-Gal-(1-&gt;4)-beta-D-Glc-(1&lt;-&gt;1)-Cer(d18:1(4E)) + UDP + H(+). It functions in the pathway protein modification; protein glycosylation. Its pathway is sphingolipid metabolism. Inhibited by EDTA. Functionally, catalyzes the synthesis of lactosylceramide (LacCer) via the transfer of galactose from UDP-galactose to glucosylceramide (GlcCer). LacCer is the starting point in the biosynthesis of all gangliosides (membrane-bound glycosphingolipids) which play pivotal roles in the CNS including neuronal maturation and axonal and myelin formation. In Homo sapiens (Human), this protein is Beta-1,4-galactosyltransferase 6.